The sequence spans 242 residues: MGKRLISQRRGRGSSVYTCPSHKRRGEAKYRRFDELEKKGKVLGKIVDILHDPGRSAPVAKVEYETGEEGLLVVPEGVKVGDIIECGVSAEIKPGNILPLGAIPEGIPVFNIETVPGDGGKLVRAGGCYAHILTHDGERTYVKLPSGHIKALHSMCRATIGVVAGGGRKEKPFVKAGKKYHAMKAKAVKWPRVRGVAMNAVDHPFGGGRHQHTGKPTTVSRKKVPPGRKVGHISARRTGVRK.

The interval 201-242 (VDHPFGGGRHQHTGKPTTVSRKKVPPGRKVGHISARRTGVRK) is disordered. Residues 220-242 (SRKKVPPGRKVGHISARRTGVRK) show a composition bias toward basic residues.

Belongs to the universal ribosomal protein uL2 family. Part of the 50S ribosomal subunit. Forms a bridge to the 30S subunit in the 70S ribosome.

In terms of biological role, one of the primary rRNA binding proteins. Required for association of the 30S and 50S subunits to form the 70S ribosome, for tRNA binding and peptide bond formation. It has been suggested to have peptidyltransferase activity; this is somewhat controversial. Makes several contacts with the 16S rRNA in the 70S ribosome. This is Large ribosomal subunit protein uL2 from Methanocaldococcus jannaschii (strain ATCC 43067 / DSM 2661 / JAL-1 / JCM 10045 / NBRC 100440) (Methanococcus jannaschii).